Here is a 195-residue protein sequence, read N- to C-terminus: Inosine triphosphate pyrophosphatase (195 aa).

Threonine 13 to lysine 18 is a binding site for ITP. Glutamate 43 contacts Mg(2+). Residues lysine 55, aspartate 71–threonine 72, lysine 88, phenylalanine 148–aspartate 151, lysine 171, and histidine 176–arginine 177 each bind ITP.

This sequence belongs to the HAM1 NTPase family. In terms of assembly, homodimer. The cofactor is Mg(2+). Mn(2+) serves as cofactor.

The protein localises to the cytoplasm. It carries out the reaction ITP + H2O = IMP + diphosphate + H(+). It catalyses the reaction dITP + H2O = dIMP + diphosphate + H(+). The catalysed reaction is XTP + H2O = XMP + diphosphate + H(+). The enzyme catalyses N(6)-hydroxy-dATP + H2O = N(6)-hydroxy-dAMP + diphosphate + H(+). In terms of biological role, pyrophosphatase that hydrolyzes the non-canonical purine nucleotides inosine triphosphate (ITP), deoxyinosine triphosphate (dITP) as well as 2'-deoxy-N-6-hydroxylaminopurine triphosphate (dHAPTP) and xanthosine 5'-triphosphate (XTP) to their respective monophosphate derivatives. The enzyme does not distinguish between the deoxy- and ribose forms. Probably excludes non-canonical purines from RNA and DNA precursor pools, thus preventing their incorporation into RNA and DNA and avoiding chromosomal lesions. The protein is Inosine triphosphate pyrophosphatase (itpa) of Xenopus laevis (African clawed frog).